The sequence spans 396 residues: Succinyl-diaminopimelate desuccinylase (396 aa).

His74 serves as a coordination point for Zn(2+). Asp76 is a catalytic residue. Residue Asp107 coordinates Zn(2+). The active-site Proton acceptor is the Glu142. Zn(2+) contacts are provided by Glu143, Glu171, and His360.

It belongs to the peptidase M20A family. DapE subfamily. In terms of assembly, homodimer. Zn(2+) is required as a cofactor. Requires Co(2+) as cofactor.

It carries out the reaction N-succinyl-(2S,6S)-2,6-diaminopimelate + H2O = (2S,6S)-2,6-diaminopimelate + succinate. The protein operates within amino-acid biosynthesis; L-lysine biosynthesis via DAP pathway; LL-2,6-diaminopimelate from (S)-tetrahydrodipicolinate (succinylase route): step 3/3. Its function is as follows. Catalyzes the hydrolysis of N-succinyl-L,L-diaminopimelic acid (SDAP), forming succinate and LL-2,6-diaminopimelate (DAP), an intermediate involved in the bacterial biosynthesis of lysine and meso-diaminopimelic acid, an essential component of bacterial cell walls. The sequence is that of Succinyl-diaminopimelate desuccinylase from Methylobacterium sp. (strain 4-46).